The following is a 154-amino-acid chain: Snaclec EMS16 subunit beta (154 aa).

Residues 1–26 (MGRLISVRFSLLVVFLSLSGIGAGLC) form the signal peptide. A disulfide bond links cysteine 27 and cysteine 38. The C-type lectin domain occupies 34-147 (FDQHCYKVFE…CEKSVSFVCK (114 aa)). Residue asparagine 47 is glycosylated (N-linked (GlcNAc...) asparagine). Intrachain disulfides connect cysteine 55/cysteine 146 and cysteine 121/cysteine 138.

Belongs to the snaclec family. Heterodimer of subunits A and B; disulfide-linked. Expressed by the venom gland.

The protein localises to the secreted. EMS16 is a potent and selective inhibitor of alpha-2/beta-1 (ITGA2/ITGB1) integrin and acts as a potent antagonist of platelet aggregation and cell migration. Binds specifically to the I domain of the alpha-2 subunit, in a metal ion-independent fashion. The protein is Snaclec EMS16 subunit beta of Echis multisquamatus (Central Asian sand viper).